A 347-amino-acid chain; its full sequence is Heat-inducible transcription repressor HrcA (347 aa).

The protein belongs to the HrcA family.

In terms of biological role, negative regulator of class I heat shock genes (grpE-dnaK-dnaJ and groELS operons). Prevents heat-shock induction of these operons. This chain is Heat-inducible transcription repressor HrcA, found in Sphingopyxis alaskensis (strain DSM 13593 / LMG 18877 / RB2256) (Sphingomonas alaskensis).